The chain runs to 434 residues: Glutamate-1-semialdehyde 2,1-aminomutase 1 (434 aa).

Residue Lys-270 is modified to N6-(pyridoxal phosphate)lysine.

Belongs to the class-III pyridoxal-phosphate-dependent aminotransferase family. HemL subfamily. Homodimer. Requires pyridoxal 5'-phosphate as cofactor.

It is found in the cytoplasm. It carries out the reaction (S)-4-amino-5-oxopentanoate = 5-aminolevulinate. Its pathway is porphyrin-containing compound metabolism; protoporphyrin-IX biosynthesis; 5-aminolevulinate from L-glutamyl-tRNA(Glu): step 2/2. The protein is Glutamate-1-semialdehyde 2,1-aminomutase 1 of Bacillus cereus (strain ATCC 10987 / NRS 248).